Here is a 49-residue protein sequence, read N- to C-terminus: Large ribosomal subunit protein bL33 (49 aa).

Belongs to the bacterial ribosomal protein bL33 family.

The protein is Large ribosomal subunit protein bL33 of Carboxydothermus hydrogenoformans (strain ATCC BAA-161 / DSM 6008 / Z-2901).